We begin with the raw amino-acid sequence, 198 residues long: Recombination protein RecR (198 aa).

A C4-type zinc finger spans residues 57 to 72; the sequence is CSVCGHITDTDPCYIC. The Toprim domain occupies 80-175; the sequence is SMICVVEETK…KVTRLAHGLP (96 aa).

This sequence belongs to the RecR family.

May play a role in DNA repair. It seems to be involved in an RecBC-independent recombinational process of DNA repair. It may act with RecF and RecO. This is Recombination protein RecR from Macrococcus caseolyticus (strain JCSC5402) (Macrococcoides caseolyticum).